The sequence spans 327 residues: MAPLITNIYTADPSAHVFNGKLYIYPSHDRETDIQFNDNGDQYDMADYHVFSLDSLDPPSEVTDHGVVLKVEDIPWVSKQLWAPDAATKDGKYYLYFPARDKEGIFRIGVAVSDKPEGPFTPDPEPIKGSYSIDPAVFVDDDGSAYMYFGGLWGGQLQCYQKGNNIFDAEWSGPKEPSGSGAKALGPRVAKLTDDMRQFAEEVREIVILAPETGEPLAADDHDRRFFEAAWMHKYNGKYYFSYSTGDTHYLVYAVGDSPYGPFTYGGRILEPVLGWTTHHSIVEFQGRWWLFHHDCELSKGVDHLRSVKVKEIWYDKDGKIVTEKPE.

Asp12 functions as the Proton acceptor in the catalytic mechanism. The active-site Proton donor is Glu228.

This sequence belongs to the glycosyl hydrolase 43 family.

It localises to the secreted. It carries out the reaction Hydrolysis of (1-&gt;4)-beta-D-xylans, to remove successive D-xylose residues from the non-reducing termini.. It catalyses the reaction Hydrolysis of terminal non-reducing alpha-L-arabinofuranoside residues in alpha-L-arabinosides.. Activity is inhibited by Ag(+), Li(+), Pb(2+), Cu(2+), Cr(3+), Co(3+), Fe(3+), Ni(2+), Mg(2+), Zn(2+), EDTA and SDS; but not by Mn(2+), Ca(2+) and beta-mercaptoethanol. Functionally, bifunctional beta-xylosidase/alpha-L-arabinosidases with a low level of xylanase activity. Is most active on 4-nitrophenyl beta-D-xylopyranoside (pNPX) (defined as 100%), moderate on p-nitrophenyl-alpha-L-arabinofuranoside (pNPA) (23.7%), and weak on beechwood xylan (15.9%) and birchwood xylan (15.2%). Is able to attack xylooligosacchardies with degrees of polymerisation of 2-5, releasing the amounts of reducing sugars in the order of xylopentose &gt; xylotetraose &gt; xylotriose &gt; xylobiose, i.e. the rate of xylose released from xylooligosacchardies increased with the chain length. No activity is detected in the presence of carboxymethyl cellulose-sodium (CMC-Na), sugar beet arabinan, AZCL-arabinan (debranched), 4-nitrophenyl a-D - galactopyranoside, 2-nitrophenyl beta-D-galactopyranoside, and 4-nitrophenyl alpha-D-glucopyranoside. This is Xylosidase/arabinosidase 43A from Humicola insolens (Soft-rot fungus).